Reading from the N-terminus, the 106-residue chain is Urease subunit beta (106 aa).

It belongs to the urease beta subunit family. As to quaternary structure, heterotrimer of UreA (gamma), UreB (beta) and UreC (alpha) subunits. Three heterotrimers associate to form the active enzyme.

The protein resides in the cytoplasm. The catalysed reaction is urea + 2 H2O + H(+) = hydrogencarbonate + 2 NH4(+). The protein operates within nitrogen metabolism; urea degradation; CO(2) and NH(3) from urea (urease route): step 1/1. This is Urease subunit beta from Klebsiella pneumoniae (strain 342).